A 303-amino-acid polypeptide reads, in one-letter code: ATP synthase gamma chain (303 aa).

Belongs to the ATPase gamma chain family. F-type ATPases have 2 components, CF(1) - the catalytic core - and CF(0) - the membrane proton channel. CF(1) has five subunits: alpha(3), beta(3), gamma(1), delta(1), epsilon(1). CF(0) has three main subunits: a, b and c.

The protein resides in the cell inner membrane. Its function is as follows. Produces ATP from ADP in the presence of a proton gradient across the membrane. The gamma chain is believed to be important in regulating ATPase activity and the flow of protons through the CF(0) complex. The protein is ATP synthase gamma chain of Elusimicrobium minutum (strain Pei191).